The following is a 359-amino-acid chain: DNA polymerase IV (359 aa).

Residues 7–188 (IIHIDMDAFY…LPIGKFFGVG (182 aa)) enclose the UmuC domain. Residues aspartate 11 and aspartate 106 each coordinate Mg(2+). Glutamate 107 is a catalytic residue.

This sequence belongs to the DNA polymerase type-Y family. Monomer. The cofactor is Mg(2+).

Its subcellular location is the cytoplasm. The enzyme catalyses DNA(n) + a 2'-deoxyribonucleoside 5'-triphosphate = DNA(n+1) + diphosphate. Poorly processive, error-prone DNA polymerase involved in untargeted mutagenesis. Copies undamaged DNA at stalled replication forks, which arise in vivo from mismatched or misaligned primer ends. These misaligned primers can be extended by PolIV. Exhibits no 3'-5' exonuclease (proofreading) activity. May be involved in translesional synthesis, in conjunction with the beta clamp from PolIII. The chain is DNA polymerase IV from Clostridium perfringens (strain SM101 / Type A).